The following is a 225-amino-acid chain: Futalosine hydrolase (225 aa).

Belongs to the PNP/UDP phosphorylase family. Futalosine hydrolase subfamily. Homotetramer.

The enzyme catalyses futalosine + H2O = dehypoxanthine futalosine + hypoxanthine. It functions in the pathway quinol/quinone metabolism; menaquinone biosynthesis. No enhancing of inhibitory effects are observed with divalent metal ions. Slightly inhibited by hypoxanthine. Functionally, catalyzes the hydrolysis of futalosine (FL) to dehypoxanthine futalosine (DHFL) and hypoxanthine, a step in the biosynthesis of menaquinone (MK, vitamin K2). Is highly specific to futalosine since it does not accept aminodeoxyfutalosine (AFL), or any structurally related nucleotides and nucleosides as substrate. The protein is Futalosine hydrolase of Thermus thermophilus (strain ATCC 27634 / DSM 579 / HB8).